Here is a 113-residue protein sequence, read N- to C-terminus: Prefoldin subunit beta (113 aa).

The protein belongs to the prefoldin subunit beta family. In terms of assembly, heterohexamer of two alpha and four beta subunits.

It is found in the cytoplasm. Functionally, molecular chaperone capable of stabilizing a range of proteins. Seems to fulfill an ATP-independent, HSP70-like function in archaeal de novo protein folding. This Methanococcus maripaludis (strain DSM 14266 / JCM 13030 / NBRC 101832 / S2 / LL) protein is Prefoldin subunit beta.